Consider the following 234-residue polypeptide: Large ribosomal subunit protein uL1 (234 aa).

It belongs to the universal ribosomal protein uL1 family. In terms of assembly, part of the 50S ribosomal subunit.

Functionally, binds directly to 23S rRNA. The L1 stalk is quite mobile in the ribosome, and is involved in E site tRNA release. Protein L1 is also a translational repressor protein, it controls the translation of the L11 operon by binding to its mRNA. The protein is Large ribosomal subunit protein uL1 of Prochlorococcus marinus (strain MIT 9211).